The chain runs to 288 residues: Sulfur carrier protein FdhD (288 aa).

Catalysis depends on Cys122, which acts as the Cysteine persulfide intermediate. Phe268–Arg273 is a Mo-bis(molybdopterin guanine dinucleotide) binding site.

Belongs to the FdhD family.

Its subcellular location is the cytoplasm. Required for formate dehydrogenase (FDH) activity. Acts as a sulfur carrier protein that transfers sulfur from IscS to the molybdenum cofactor prior to its insertion into FDH. The polypeptide is Sulfur carrier protein FdhD (Anaeromyxobacter sp. (strain K)).